The primary structure comprises 249 residues: Methyl-coenzyme M reductase subunit gamma (249 aa).

Positions 43-62 are disordered; it reads RAPGEEYPSVHPPLEELDEP. Arg-120 is a binding site for coenzyme M.

It belongs to the methyl-coenzyme M reductase gamma subunit family. MCR is a hexamer of two alpha, two beta, and two gamma chains, forming a dimer of heterotrimers. Coenzyme F430 serves as cofactor.

The protein resides in the cytoplasm. The enzyme catalyses coenzyme B + methyl-coenzyme M = methane + coenzyme M-coenzyme B heterodisulfide. It participates in one-carbon metabolism; methyl-coenzyme M reduction; methane from methyl-coenzyme M: step 1/1. Its function is as follows. Component of the methyl-coenzyme M reductase (MCR) I that catalyzes the reductive cleavage of methyl-coenzyme M (CoM-S-CH3 or 2-(methylthio)ethanesulfonate) using coenzyme B (CoB or 7-mercaptoheptanoylthreonine phosphate) as reductant which results in the production of methane and the mixed heterodisulfide of CoB and CoM (CoM-S-S-CoB). This is the final step in methanogenesis. This is Methyl-coenzyme M reductase subunit gamma (mcrG) from Methanothermus fervidus.